We begin with the raw amino-acid sequence, 268 residues long: Secreted RxLR effector protein 32 (268 aa).

Positions 1–21 are cleaved as a signal peptide; the sequence is MRGAYYVAFALLVAASTRTAA. The RxLR-dEER signature appears at 50–71; it reads RILRESPDPKDRLPVYASDEER. A disordered region spans residues 120–257; it reads PKLEIKKSKR…PTPESLGIGG (138 aa). Residues 148–161 show a composition bias toward low complexity; sequence SNSKKSLVSSASAK. The segment covering 212 to 224 has biased composition (basic and acidic residues); the sequence is NLDKNKRPDEAKI.

Belongs to the RxLR effector family.

It localises to the secreted. The protein localises to the host cell. Its function is as follows. Secreted effector that completely suppresses the host cell death induced by cell death-inducing proteins. The chain is Secreted RxLR effector protein 32 from Plasmopara viticola (Downy mildew of grapevine).